We begin with the raw amino-acid sequence, 355 residues long: N6-Methyl-AMP deaminase (355 aa).

2 residues coordinate Zn(2+): His-24 and His-26. N(6)-methyl-AMP is bound by residues His-26, Asn-28, His-74, 106–109 (STPR), Asp-148, and Gly-181. Zn(2+) is bound at residue His-208. N(6)-methyl-AMP is bound by residues Glu-211, Asp-293, and Asp-294. Glu-211 (proton donor) is an active-site residue. Residue Asp-293 participates in Zn(2+) binding.

This sequence belongs to the metallo-dependent hydrolases superfamily. Adenosine and AMP deaminases family. As to quaternary structure, monomer. Zn(2+) serves as cofactor.

The catalysed reaction is N(6)-methyl-AMP + H2O + H(+) = IMP + methylamine. In terms of biological role, catalyzes the hydrolysis of the free cytosolic methylated adenosine nucleotide N(6)-methyl-AMP (N6-mAMP) to produce inositol monophosphate (IMP) and methylamine. Is required for the catabolism of cytosolic N6-mAMP, which is derived from the degradation of mRNA containing N6-methylated adenine (m6A). Catalyzes the removal of different alkyl groups not only from N6-substituted purine or 2-aminopurine nucleoside monophosphates but also from O6-substituted compounds in vitro. The chain is N6-Methyl-AMP deaminase from Homo sapiens (Human).